We begin with the raw amino-acid sequence, 86 residues long: Weak neurotoxin 9 (86 aa).

The signal sequence occupies residues Met-1–Thr-21. Intrachain disulfides connect Cys-24-Cys-45, Cys-27-Cys-32, Cys-38-Cys-63, Cys-67-Cys-78, and Cys-79-Cys-84.

This sequence belongs to the three-finger toxin family. Ancestral subfamily. Orphan group II sub-subfamily. In terms of tissue distribution, expressed by the venom gland.

It localises to the secreted. In terms of biological role, binds with low affinity to muscular (alpha-1-beta-1-delta-epsilon/CHRNA1-CHRNB1-CHRND-CHRNE) and very low affinity to neuronal (alpha-7/CHRNA7) nicotinic acetylcholine receptor (nAChR). This is Weak neurotoxin 9 from Naja sputatrix (Malayan spitting cobra).